A 518-amino-acid chain; its full sequence is MAAAPPAVAVNGGGMAAAKVASQAYLESKAVKDTRVLIADLCKQFYTLGWVSGTGGSITIKAHDDSIPKRQQLILMSPSGVQKERMEPEDMYVLATNGSILSSPSPKPYPYKPPKCSDCAPLFLKAYDMRNAGAVIHSHGMESCLVTMINPLSKEFRITHMEMIKGIQGHGYYDELVVPIIENTAYENELTDSLAKAIEAYPKTTAVLVRNHGIYIWGDSWISAKTQAECYHYLFDAAIKLHQIGLDWSTPNHGPIQNVKVKAGMNNSNNRIEPLPRCIVLDIEGTTTPITFVADVLFPYARDNVGRHLSATYDTAETKDDINLLRTQVEDDLAQGVDGAIPIPTDDAGKEEVIAALVANVEAMIKADRKITALKQLQGHIWRTGYENNELEGVVYDDVPEALEKWHALGIKVYIYSSGSRLAQRLIFGKTNYGDLRKYLSGFFDTTVGNKKETRSYIEISESLGVDKPSDILFVTDVFQEAFAAKGAGLDVMISIRPGNAPLPENHGFKTITSFAEI.

The tract at residues 1 to 247 (MAAAPPAVAV…AIKLHQIGLD (247 aa)) is methylthioribulose-1-phosphate dehydratase. Cys-119 is a binding site for substrate. Residues His-137 and His-139 each coordinate Zn(2+). Glu-162 functions as the Proton donor/acceptor; for methylthioribulose-1-phosphate dehydratase activity in the catalytic mechanism. His-212 is a binding site for Zn(2+). The tract at residues 279–518 (IVLDIEGTTT…FKTITSFAEI (240 aa)) is enolase-phosphatase E1. Residues Asp-282 and Glu-284 each contribute to the Mg(2+) site. Substrate-binding positions include 417–418 (SS) and Lys-451. Asp-477 is a binding site for Mg(2+).

The protein in the N-terminal section; belongs to the aldolase class II family. MtnB subfamily. This sequence in the C-terminal section; belongs to the HAD-like hydrolase superfamily. MasA/MtnC family. Zn(2+) is required as a cofactor. Requires Mg(2+) as cofactor.

It carries out the reaction 5-(methylsulfanyl)-D-ribulose 1-phosphate = 5-methylsulfanyl-2,3-dioxopentyl phosphate + H2O. The enzyme catalyses 5-methylsulfanyl-2,3-dioxopentyl phosphate + H2O = 1,2-dihydroxy-5-(methylsulfanyl)pent-1-en-3-one + phosphate. The protein operates within amino-acid biosynthesis; L-methionine biosynthesis via salvage pathway; L-methionine from S-methyl-5-thio-alpha-D-ribose 1-phosphate: step 2/6. Its pathway is amino-acid biosynthesis; L-methionine biosynthesis via salvage pathway; L-methionine from S-methyl-5-thio-alpha-D-ribose 1-phosphate: step 3/6. It functions in the pathway amino-acid biosynthesis; L-methionine biosynthesis via salvage pathway; L-methionine from S-methyl-5-thio-alpha-D-ribose 1-phosphate: step 4/6. The sequence is that of Probable bifunctional methylthioribulose-1-phosphate dehydratase/enolase-phosphatase E1 from Populus trichocarpa (Western balsam poplar).